The primary structure comprises 493 residues: Cytochrome P450 2E1 (493 aa).

298 to 303 (FAGTET) is a substrate binding site. Heme is bound at residue C437.

The protein belongs to the cytochrome P450 family. Interacts with chaperones HSP70 and HSP90; this interaction is required for initial targeting to mitochondria. Heme is required as a cofactor.

It is found in the endoplasmic reticulum membrane. Its subcellular location is the microsome membrane. The protein resides in the mitochondrion inner membrane. It catalyses the reaction an organic molecule + reduced [NADPH--hemoprotein reductase] + O2 = an alcohol + oxidized [NADPH--hemoprotein reductase] + H2O + H(+). The enzyme catalyses (5Z,8Z,11Z)-eicosatrienoate + reduced [NADPH--hemoprotein reductase] + O2 = 19-hydroxy-(5Z,8Z,11Z)-eicosatrienoate + oxidized [NADPH--hemoprotein reductase] + H2O + H(+). The catalysed reaction is (5Z,8Z,11Z,14Z,17Z)-eicosapentaenoate + reduced [NADPH--hemoprotein reductase] + O2 = 19-hydroxy-(5Z,8Z,11Z,14Z,17Z)-eicosapentaenoate + oxidized [NADPH--hemoprotein reductase] + H2O + H(+). It carries out the reaction (4Z,7Z,10Z,13Z,16Z,19Z)-docosahexaenoate + reduced [NADPH--hemoprotein reductase] + O2 = 21-hydroxy-(4Z,7Z,10Z,13Z,16Z,19Z)-docosahexaenoate + oxidized [NADPH--hemoprotein reductase] + H2O + H(+). It catalyses the reaction dodecanoate + reduced [NADPH--hemoprotein reductase] + O2 = 11-hydroxydodecanoate + oxidized [NADPH--hemoprotein reductase] + H2O + H(+). The enzyme catalyses tetradecanoate + reduced [NADPH--hemoprotein reductase] + O2 = 13-hydroxytetradecanoate + oxidized [NADPH--hemoprotein reductase] + H2O + H(+). The catalysed reaction is 4-nitrophenol + NADPH + O2 + H(+) = 4-nitrocatechol + NADP(+) + H2O. It functions in the pathway lipid metabolism; fatty acid metabolism. The omega-1 hydroxylase activity is stimulated by cytochrome b5. Its function is as follows. A cytochrome P450 monooxygenase involved in the metabolism of fatty acids. Mechanistically, uses molecular oxygen inserting one oxygen atom into a substrate, and reducing the second into a water molecule, with two electrons provided by NADPH via cytochrome P450 reductase (NADPH--hemoprotein reductase). Catalyzes the hydroxylation of carbon-hydrogen bonds. Hydroxylates fatty acids specifically at the omega-1 position displaying the highest catalytic activity for saturated fatty acids. May be involved in the oxidative metabolism of xenobiotics. This is Cytochrome P450 2E1 (CYP2E1) from Macaca mulatta (Rhesus macaque).